A 437-amino-acid chain; its full sequence is F-box only protein 9 (437 aa).

Residues 1-29 form a disordered region; that stretch reads MAEAEEDCHSEAVREGDDDDENESPAETD. Over residues 16-26 the composition is skewed to acidic residues; sequence GDDDDENESPA. The TPR repeat unit spans residues 84-117; it reads ARELFLKAVEEEQNGALYEAIKFYRRAMQLVPDI. A Phosphoserine modification is found at Ser126. In terms of domain architecture, F-box spans 175–226; that stretch reads QTHISALPMEVLMYVFRWVVSSDLDLRSLEQLSQVCRGFYICARDPEIWRLA.

In terms of assembly, part of the SCF (SKP1-CUL1-F-box) E3 ubiquitin-protein ligase complex SCF(FBXO9) composed of CUL1, SKP1, RBX1 and FBXO9. Interacts with TTI1 and TELO2; when TTI1 and TELO2 are phosphorylated by CK2.

The protein resides in the cytoplasm. It participates in protein modification; protein ubiquitination. Its function is as follows. Substrate recognition component of a SCF (SKP1-CUL1-F-box protein) E3 ubiquitin-protein ligase complex which mediates the ubiquitination and subsequent proteasomal degradation of target proteins and plays a role in several biological processes such as cell cycle, cell proliferation, or maintenance of chromosome stability. Ubiquitinates mTORC1-bound TTI1 and TELO2 when they are phosphorylated by CK2 following growth factor deprivation, leading to their degradation. In contrast, does not mediate ubiquitination of TTI1 and TELO2 when they are part of the mTORC2 complex. As a consequence, mTORC1 is inactivated to restrain cell growth and protein translation, while mTORC2 is the activated due to the relief of feedback inhibition by mTORC1. Plays a role in maintaining epithelial cell survival by regulating the turn-over of chromatin modulator PRMT4 through ubiquitination and degradation by the proteasomal pathway. Also regulates PPARgamma stability by facilitating PPARgamma/PPARG ubiquitination and thereby plays a role in adipocyte differentiation. The polypeptide is F-box only protein 9 (FBXO9) (Bos taurus (Bovine)).